The following is a 408-amino-acid chain: Tryptophan--tRNA ligase, chloroplastic/mitochondrial (408 aa).

A chloroplast and mitochondrion-targeting transit peptide spans 1–52 (MGHATSLSHFLILSSSRFSRLGSLTRLLSKPTSLSGSFSSISVTGQGFRCCC). Position 53 is an N-acetylserine (Ser53). Residues Gln72 and 78–81 (HLGN) each bind ATP. A 'HIGH' region motif is present at residues 73–81 (PTGSVHLGN). Position 197 (Asp197) interacts with L-tryptophan. ATP contacts are provided by residues 209-211 (GED), Val260, 269-273 (KMSKS), and Lys272. The 'KMSKS' region motif lies at 269–273 (KMSKS).

Belongs to the class-I aminoacyl-tRNA synthetase family.

Its subcellular location is the plastid. It localises to the chloroplast. It is found in the mitochondrion. The catalysed reaction is tRNA(Trp) + L-tryptophan + ATP = L-tryptophyl-tRNA(Trp) + AMP + diphosphate + H(+). This chain is Tryptophan--tRNA ligase, chloroplastic/mitochondrial, found in Arabidopsis thaliana (Mouse-ear cress).